Consider the following 329-residue polypeptide: N-acetyl-gamma-glutamyl-phosphate reductase (329 aa).

Residue Cys155 is part of the active site.

Belongs to the NAGSA dehydrogenase family. Type 1 subfamily.

It localises to the cytoplasm. It carries out the reaction N-acetyl-L-glutamate 5-semialdehyde + phosphate + NADP(+) = N-acetyl-L-glutamyl 5-phosphate + NADPH + H(+). The protein operates within amino-acid biosynthesis; L-arginine biosynthesis; N(2)-acetyl-L-ornithine from L-glutamate: step 3/4. Functionally, catalyzes the NADPH-dependent reduction of N-acetyl-5-glutamyl phosphate to yield N-acetyl-L-glutamate 5-semialdehyde. The sequence is that of N-acetyl-gamma-glutamyl-phosphate reductase from Shewanella pealeana (strain ATCC 700345 / ANG-SQ1).